The chain runs to 265 residues: MLIPRLDEVRRALTAFHFFNTLLALAFPVIRSTSLCDYVFAVEGNEQCEIDSREREILMFLLIILAWKGRKATNWMHYVNNIFLFSKIAGMFLFIRADILPGIIYILACLIVTVLFPEPVYNGPEQVTYFQGEQLFEELTRNRNTIWVIQFFTTWSPECRHTSPVFAELSQKFTLPNMKFGKLDIGRWAKEGERFRVNAHPMSRQLPTICVFKDAKEIARRPLVNDSRRAVPFVFSEENCVLAFDLLNLYNEQKEKKGAKAKKED.

An N-terminal signal peptide occupies residues 1-32; the sequence is MLIPRLDEVRRALTAFHFFNTLLALAFPVIRS. Over 33 to 96 the chain is Extracellular; sequence TSLCDYVFAV…KIAGMFLFIR (64 aa). A helical transmembrane segment spans residues 97–117; the sequence is ADILPGIIYILACLIVTVLFP. The Cytoplasmic segment spans residues 118 to 265; sequence EPVYNGPEQV…KKGAKAKKED (148 aa). The Thioredoxin domain occupies 126–230; the sequence is QVTYFQGEQL…RPLVNDSRRA (105 aa). The short motif at 262 to 265 is the Di-lysine motif element; sequence KKED.

It localises to the membrane. The protein is Thioredoxin-related transmembrane protein 2 homolog of Caenorhabditis elegans.